We begin with the raw amino-acid sequence, 320 residues long: MLSRRNPQLNNHGELIHLLSTEGLPRAVLTQILDTASTFLSVNDRDVKKVPLLRGKSVFNLFFENSTRTRTTFEIAAKRLSADVINLDIAKSSAAKGESLLDTIANLSAMHADMFVVRHSESGAPYLIAEHCAPHVHVVNAGDGRHAHPTQGLLDMYTIRHYKKDFTGLRVAIVGDIVHSRVARSDIHALTTLGVPDIRAVGPKTLVPGDLRDMGVRVCHDMAEGIKDADVIIMLRLQNERMSGAMLPSAGEYFKSYGLTADKLALAAPDCIVMHPGPINRGVEIESTVADGAHSVILPQVTFGIAVRMAVMSIIAGNDA.

2 residues coordinate carbamoyl phosphate: Arg68 and Thr69. Lys96 provides a ligand contact to L-aspartate. 3 residues coordinate carbamoyl phosphate: Arg118, His148, and Gln151. L-aspartate-binding residues include Arg181 and Arg236. 2 residues coordinate carbamoyl phosphate: Gly277 and Pro278.

This sequence belongs to the aspartate/ornithine carbamoyltransferase superfamily. ATCase family. Heterododecamer (2C3:3R2) of six catalytic PyrB chains organized as two trimers (C3), and six regulatory PyrI chains organized as three dimers (R2).

The catalysed reaction is carbamoyl phosphate + L-aspartate = N-carbamoyl-L-aspartate + phosphate + H(+). Its pathway is pyrimidine metabolism; UMP biosynthesis via de novo pathway; (S)-dihydroorotate from bicarbonate: step 2/3. Catalyzes the condensation of carbamoyl phosphate and aspartate to form carbamoyl aspartate and inorganic phosphate, the committed step in the de novo pyrimidine nucleotide biosynthesis pathway. The polypeptide is Aspartate carbamoyltransferase catalytic subunit (Leptothrix cholodnii (strain ATCC 51168 / LMG 8142 / SP-6) (Leptothrix discophora (strain SP-6))).